We begin with the raw amino-acid sequence, 1095 residues long: Tyrosine-sulfated glycopeptide receptor 1 (1095 aa).

The chain crosses the membrane as a helical span at residues 23 to 43; it reads PHMVLFVLLYVLSISVFFLTV. 2 N-linked (GlcNAc...) asparagine glycosylation sites follow: Asn62 and Asn73. 19 LRR repeats span residues 91 to 115, 116 to 139, 141 to 165, 170 to 195, 197 to 221, 223 to 246, 247 to 270, 271 to 294, 295 to 318, 320 to 342, 344 to 366, 367 to 391, 393 to 415, 416 to 439, 441 to 466, 470 to 494, 495 to 517, 518 to 542, and 566 to 589; these read ENRV…VLDL, QRLS…FLSA, DQLL…SFGN, IFPI…VFLQ, AFNL…MCTA, PQLT…LSRC, SRLS…IYNL, PELE…ITRL, TKLT…IGKL, KLSS…LANC, KLVK…DFSR, FQSL…VYSC, MMTA…VLEL, ESLS…SILQ, CKKL…DFLR, FPSL…LIKL, QRVE…WLGT, LPDL…LFQL, and NPNN…IYIK. Asn165 carries an N-linked (GlcNAc...) asparagine glycan. N-linked (GlcNAc...) asparagine glycans are attached at residues Asn199, Asn204, and Asn207. Asn258 carries an N-linked (GlcNAc...) asparagine glycan. Asn341 carries an N-linked (GlcNAc...) asparagine glycan. Asn377 is a glycosylation site (N-linked (GlcNAc...) asparagine). Asn430 carries an N-linked (GlcNAc...) asparagine glycan. N-linked (GlcNAc...) asparagine glycans are attached at residues Asn569, Asn592, Asn616, Asn627, Asn640, Asn662, and Asn714. 3 LRR repeats span residues 604 to 628, 629 to 652, and 654 to 677; these read LKVL…LSNL, TNLE…LTGL, and FLSY…QFDT. A helical membrane pass occupies residues 721-741; that stretch reads LVLGLFFGVSLILVLLALLVL. Thr792 and Thr800 each carry phosphothreonine. The 272-residue stretch at 803-1074 folds into the Protein kinase domain; sequence FSQANIIGCG…PNIQQVVDWL (272 aa). Residues 809–817 and Lys831 contribute to the ATP site; that span reads IGCGGFGLV. Phosphotyrosine is present on residues Tyr876 and Tyr916. Residue Asp929 is the Proton acceptor of the active site. Tyr971 is modified (phosphotyrosine).

The protein belongs to the protein kinase superfamily. Ser/Thr protein kinase family. In terms of assembly, homo- and heterodimers with PSKR1. Interacts (via C-terminus) with AHA1 and AHA2 (via the R-domain). Autophosphorylated. As to expression, expressed ubiquitously, including in the shoot apical meristem and in the elongation zone of the root meristem.

Its subcellular location is the cell membrane. The enzyme catalyses L-seryl-[protein] + ATP = O-phospho-L-seryl-[protein] + ADP + H(+). It carries out the reaction L-threonyl-[protein] + ATP = O-phospho-L-threonyl-[protein] + ADP + H(+). Tyrosine-sulfated glycopeptide receptor with a serine/threonine-protein kinase activity. Regulates, in response to tyrosine-sulfated glycopeptide binding, a signaling cascade involved in cellular proliferation and plant growth. Not involved in PSK perception. Involved in plant immunity, with antagonistic effects on bacterial and fungal resistances. Mediates activation of the plasma membrane H(+)-ATPase by PSY1. Phosphorylates AHA2 at Thr-881. This is Tyrosine-sulfated glycopeptide receptor 1 from Arabidopsis thaliana (Mouse-ear cress).